The chain runs to 208 residues: Ribosomal RNA large subunit methyltransferase E (208 aa).

S-adenosyl-L-methionine is bound by residues Gly62, Trp64, Asp82, Asp98, and Asp123. Residue Lys163 is the Proton acceptor of the active site.

It belongs to the class I-like SAM-binding methyltransferase superfamily. RNA methyltransferase RlmE family.

The protein localises to the cytoplasm. The catalysed reaction is uridine(2552) in 23S rRNA + S-adenosyl-L-methionine = 2'-O-methyluridine(2552) in 23S rRNA + S-adenosyl-L-homocysteine + H(+). Its function is as follows. Specifically methylates the uridine in position 2552 of 23S rRNA at the 2'-O position of the ribose in the fully assembled 50S ribosomal subunit. The chain is Ribosomal RNA large subunit methyltransferase E from Edwardsiella ictaluri (strain 93-146).